We begin with the raw amino-acid sequence, 345 residues long: Isopentenyl-diphosphate delta-isomerase (345 aa).

6 to 7 provides a ligand contact to substrate; sequence RK. Residues 63–65, serine 93, and asparagine 122 each bind FMN; that span reads SMT. Residue 93-95 participates in substrate binding; it reads SQR. Position 156 (glutamine 156) interacts with substrate. Glutamate 157 is a binding site for Mg(2+). FMN contacts are provided by residues lysine 188, threonine 218, 265–267, and 286–287; these read GLR and AL.

It belongs to the IPP isomerase type 2 family. As to quaternary structure, homooctamer. Dimer of tetramers. Requires FMN as cofactor. It depends on NADPH as a cofactor. Mg(2+) is required as a cofactor.

It localises to the cytoplasm. It catalyses the reaction isopentenyl diphosphate = dimethylallyl diphosphate. Involved in the biosynthesis of isoprenoids. Catalyzes the 1,3-allylic rearrangement of the homoallylic substrate isopentenyl (IPP) to its allylic isomer, dimethylallyl diphosphate (DMAPP). The sequence is that of Isopentenyl-diphosphate delta-isomerase from Archaeoglobus fulgidus (strain ATCC 49558 / DSM 4304 / JCM 9628 / NBRC 100126 / VC-16).